The sequence spans 366 residues: Chorismate synthase (366 aa).

NADP(+)-binding residues include R48 and R54. FMN contacts are provided by residues 132 to 134 (RSS), 244 to 245 (NA), G289, 304 to 308 (KPTSS), and R330.

It belongs to the chorismate synthase family. As to quaternary structure, homotetramer. FMNH2 serves as cofactor.

The catalysed reaction is 5-O-(1-carboxyvinyl)-3-phosphoshikimate = chorismate + phosphate. It functions in the pathway metabolic intermediate biosynthesis; chorismate biosynthesis; chorismate from D-erythrose 4-phosphate and phosphoenolpyruvate: step 7/7. Catalyzes the anti-1,4-elimination of the C-3 phosphate and the C-6 proR hydrogen from 5-enolpyruvylshikimate-3-phosphate (EPSP) to yield chorismate, which is the branch point compound that serves as the starting substrate for the three terminal pathways of aromatic amino acid biosynthesis. This reaction introduces a second double bond into the aromatic ring system. The sequence is that of Chorismate synthase from Methylorubrum populi (strain ATCC BAA-705 / NCIMB 13946 / BJ001) (Methylobacterium populi).